A 1178-amino-acid chain; its full sequence is DNA-directed RNA polymerase subunit beta (1178 aa).

The tract at residues 1–37 (MLEGCILADSRQSKTAASPSPSRPQSSSNNSVPGAPN) is disordered. Positions 18–33 (SPSPSRPQSSSNNSVP) are enriched in low complexity.

This sequence belongs to the RNA polymerase beta chain family. In terms of assembly, the RNAP catalytic core consists of 2 alpha, 1 beta, 1 beta' and 1 omega subunit. When a sigma factor is associated with the core the holoenzyme is formed, which can initiate transcription.

The enzyme catalyses RNA(n) + a ribonucleoside 5'-triphosphate = RNA(n+1) + diphosphate. DNA-dependent RNA polymerase catalyzes the transcription of DNA into RNA using the four ribonucleoside triphosphates as substrates. The chain is DNA-directed RNA polymerase subunit beta from Mycobacterium tuberculosis (strain CDC 1551 / Oshkosh).